A 299-amino-acid chain; its full sequence is Cycloserine biosynthesis protein DcsG (299 aa).

ATP is bound by residues Lys92, Lys137, Ser144, Gln175, Pro176, and Val178. Positions Leu95–Lys298 constitute an ATP-grasp domain. Active-site residues include Arg220 and Arg254. 2 residues coordinate Mg(2+): Glu269 and Glu271. Glu271 is a catalytic residue.

Monomer. Mg(2+) is required as a cofactor.

It carries out the reaction O-ureido-D-serine + ATP + H2O + H(+) = D-cycloserine + NH4(+) + ADP + phosphate + CO2. Involved in the biosynthesis of the antibiotic D-cycloserine (DCS), a cyclic structural analog of D-alanine, used as an antitubercular agent. Catalyzes the synthesis of D-cycloserine from O-ureido-D-serine (D-OUS). It reacts with D-OUS, D-homocysteine and beta-aminooxy-D-alanine. This chain is Cycloserine biosynthesis protein DcsG, found in Streptomyces lavendulae.